Here is a 451-residue protein sequence, read N- to C-terminus: Protein FAM117A (451 aa).

The span at 1–25 shows a compositional bias: gly residues; sequence MSGAAAGGRGGGSWGPGRGGAGGLR. Disordered regions lie at residues 1–83 and 164–183; these read MSGA…RPQP and RTKLSRSGKEKERSCPVQGD. Phosphoserine occurs at positions 29 and 67. The stretch at 149-175 forms a coiled coil; the sequence is TDHRKEITKLKQQLQRTKLSRSGKEKE. Residues S193 and S213 each carry the phosphoserine modification. A disordered region spans residues 242-293; it reads DGHRAPAPPQNSSCDHSLLLEPGNLTSSPSVPLASPQPPSQASREEHQGATE. A phosphoserine mark is found at S318 and S326. T353 carries the post-translational modification Phosphothreonine. Positions 403-451 are disordered; sequence SPGSPLPTASPRAPRKGPEASKASSLPSEPWQRSPPSEESVLFQSSLVV. A phosphoserine mark is found at S412 and S426. Residues 436-451 are compositionally biased toward polar residues; it reads SPPSEESVLFQSSLVV.

It belongs to the FAM117 family.

This chain is Protein FAM117A (Fam117a), found in Mus musculus (Mouse).